The following is a 538-amino-acid chain: Cytochrome P450 monooxygenase verH (538 aa).

Residues 2-21 (VFAMLVVCWSIFLGLWMLVS) form a helical membrane-spanning segment. Cys445 contributes to the heme binding site.

The protein belongs to the cytochrome P450 family. Requires heme as cofactor.

It localises to the membrane. Its pathway is secondary metabolite biosynthesis; terpenoid biosynthesis. It participates in mycotoxin biosynthesis. Functionally, cytochrome P450 monooxygenase; part of the gene cluster that mediates the biosynthesis of the neurotoxin verrucosidin, a methylated alpha-pyrone polyketide that inhibits oxidative phosphorylation in mitochondria and thereby causes neurological diseases. The carbon backbone of verrucosidin is synthesized by the HR-PKS verA, and further modified by the other verrucodidin cluster enzymes. The polypeptide is Cytochrome P450 monooxygenase verH (Penicillium polonicum).